The primary structure comprises 492 residues: Proline--tRNA ligase (492 aa).

The protein belongs to the class-II aminoacyl-tRNA synthetase family. ProS type 3 subfamily. In terms of assembly, homodimer.

The protein resides in the cytoplasm. The enzyme catalyses tRNA(Pro) + L-proline + ATP = L-prolyl-tRNA(Pro) + AMP + diphosphate. Catalyzes the attachment of proline to tRNA(Pro) in a two-step reaction: proline is first activated by ATP to form Pro-AMP and then transferred to the acceptor end of tRNA(Pro). The chain is Proline--tRNA ligase from Flavobacterium johnsoniae (strain ATCC 17061 / DSM 2064 / JCM 8514 / BCRC 14874 / CCUG 350202 / NBRC 14942 / NCIMB 11054 / UW101) (Cytophaga johnsonae).